Reading from the N-terminus, the 603-residue chain is Elongation factor 4 (603 aa).

Residues 2–184 (NHIRNFSIIA…AIVHKMPAPR (183 aa)) form the tr-type G domain. Residues 14 to 19 (DHGKST) and 131 to 134 (NKMD) contribute to the GTP site.

This sequence belongs to the TRAFAC class translation factor GTPase superfamily. Classic translation factor GTPase family. LepA subfamily.

It localises to the cell inner membrane. The catalysed reaction is GTP + H2O = GDP + phosphate + H(+). Required for accurate and efficient protein synthesis under certain stress conditions. May act as a fidelity factor of the translation reaction, by catalyzing a one-codon backward translocation of tRNAs on improperly translocated ribosomes. Back-translocation proceeds from a post-translocation (POST) complex to a pre-translocation (PRE) complex, thus giving elongation factor G a second chance to translocate the tRNAs correctly. Binds to ribosomes in a GTP-dependent manner. The protein is Elongation factor 4 of Variovorax paradoxus (strain S110).